A 147-amino-acid chain; its full sequence is MVHFTAEEKAAITSLWSKMNVEEAGGEALGRLLVVYPWTQRFFDNFGNLSSPSAILGNPKVKAHGKKVLTSFGDAIKNMDNLKTTFAKLSELHCDKLHVDPENFRLLGNVMVIILATHFGKEFTPEVQAAWQKLVSAVAIALGHKYH.

Residues 3–147 (HFTAEEKAAI…VAIALGHKYH (145 aa)) enclose the Globin domain. A phosphoserine mark is found at S14 and S51. 2 residues coordinate heme b: H64 and H93.

This sequence belongs to the globin family. Heterotetramer of two alpha chains and two epsilon chains in early embryonic hemoglobin Gower-2; two zeta chains and two epsilon chains in early embryonic hemoglobin Gower-1. In terms of tissue distribution, red blood cells.

In terms of biological role, the epsilon chain is a beta-type chain of early mammalian embryonic hemoglobin. This is Hemoglobin subunit epsilon (HBE1) from Saimiri boliviensis boliviensis (Bolivian squirrel monkey).